The primary structure comprises 198 residues: dCTP deaminase (198 aa).

DCTP contacts are provided by residues 110 to 115, D128, 136 to 138, Y171, K178, and Q182; these read RSSLAR and VLE. E138 (proton donor/acceptor) is an active-site residue. The disordered stretch occupies residues 168 to 198; sequence ARPYNKREDAKYRDQKGAVASRISQDEKVNK. Residues 172-183 show a composition bias toward basic and acidic residues; that stretch reads NKREDAKYRDQK.

This sequence belongs to the dCTP deaminase family. As to quaternary structure, homotrimer.

The enzyme catalyses dCTP + H2O + H(+) = dUTP + NH4(+). It functions in the pathway pyrimidine metabolism; dUMP biosynthesis; dUMP from dCTP (dUTP route): step 1/2. Its function is as follows. Catalyzes the deamination of dCTP to dUTP. The polypeptide is dCTP deaminase (Colwellia psychrerythraea (strain 34H / ATCC BAA-681) (Vibrio psychroerythus)).